The sequence spans 468 residues: Probable ubiquitin carboxyl-terminal hydrolase R319 (468 aa).

Residues 42–462 enclose the USP domain; sequence TGIMNLGNTC…NAYILFYIRS (421 aa). Catalysis depends on Cys-51, which acts as the Nucleophile. His-420 (proton acceptor) is an active-site residue.

This sequence belongs to the peptidase C19 family.

The catalysed reaction is Thiol-dependent hydrolysis of ester, thioester, amide, peptide and isopeptide bonds formed by the C-terminal Gly of ubiquitin (a 76-residue protein attached to proteins as an intracellular targeting signal).. This Acanthamoeba polyphaga (Amoeba) protein is Probable ubiquitin carboxyl-terminal hydrolase R319.